Reading from the N-terminus, the 98-residue chain is Acylphosphatase (98 aa).

One can recognise an Acylphosphatase-like domain in the interval 12–98; that stretch reads TYYVRVRGVV…EKRFERFQQQ (87 aa). Residues Arg-27 and Asn-45 contribute to the active site.

This sequence belongs to the acylphosphatase family.

The catalysed reaction is an acyl phosphate + H2O = a carboxylate + phosphate + H(+). This Burkholderia cenocepacia (strain HI2424) protein is Acylphosphatase (acyP).